Consider the following 459-residue polypeptide: uncharacterized protein (459 aa).

12 consecutive transmembrane segments (helical) span residues 25 to 45 (SYGF…IYLL), 52 to 72 (AGIP…FAAI), 95 to 115 (PYLL…FLSP), 123 to 143 (LIYA…VNIP), 167 to 187 (IGSL…LVKF), 192 to 212 (VGYP…FYIC), 249 to 269 (VLMT…LVYF), 279 to 299 (LMAY…VFLP), 310 to 330 (TAMI…MLPS), 332 to 352 (VYVF…PNGI), 389 to 409 (SLSG…PNAV), and 420 to 440 (ALLL…IGFL).

Belongs to the sodium:galactoside symporter (TC 2.A.2) family.

It localises to the cell membrane. This is an uncharacterized protein from Bacillus subtilis (strain 168).